The primary structure comprises 372 residues: Chaperone protein DnaJ (372 aa).

The J domain occupies 3 to 68 (NLYEILEVNE…EKRKKYDMYG (66 aa)). Residues 130 to 212 (GTKKEISYKK…CKGKGYEIER (83 aa)) form a CR-type zinc finger. Positions 143, 146, 160, 163, 186, 189, 200, and 203 each coordinate Zn(2+). CXXCXGXG motif repeat units follow at residues 143–150 (CHVCNGDG), 160–167 (CEKCHGTG), 186–193 (CDKCHGEG), and 200–207 (CENCKGKG).

It belongs to the DnaJ family. As to quaternary structure, homodimer. Requires Zn(2+) as cofactor.

Its subcellular location is the cytoplasm. Functionally, participates actively in the response to hyperosmotic and heat shock by preventing the aggregation of stress-denatured proteins and by disaggregating proteins, also in an autonomous, DnaK-independent fashion. Unfolded proteins bind initially to DnaJ; upon interaction with the DnaJ-bound protein, DnaK hydrolyzes its bound ATP, resulting in the formation of a stable complex. GrpE releases ADP from DnaK; ATP binding to DnaK triggers the release of the substrate protein, thus completing the reaction cycle. Several rounds of ATP-dependent interactions between DnaJ, DnaK and GrpE are required for fully efficient folding. Also involved, together with DnaK and GrpE, in the DNA replication of plasmids through activation of initiation proteins. This chain is Chaperone protein DnaJ, found in Finegoldia magna (strain ATCC 29328 / DSM 20472 / WAL 2508) (Peptostreptococcus magnus).